Consider the following 392-residue polypeptide: Phospho-N-acetylmuramoyl-pentapeptide-transferase (392 aa).

A run of 10 helical transmembrane segments spans residues 28-48 (RALM…PYVI), 74-94 (TPTM…LMWF), 100-120 (FVWI…VDDW), 137-157 (YFWQ…SISE), 193-213 (VSYP…IVGA), 225-245 (GLAI…AYVT), 262-282 (SGEL…FLWF), 289-309 (VFMG…IAVI), 314-334 (IVFF…MAQV), and 369-389 (QVVV…LSTL).

Belongs to the glycosyltransferase 4 family. MraY subfamily. Requires Mg(2+) as cofactor.

The protein localises to the cell inner membrane. The enzyme catalyses UDP-N-acetyl-alpha-D-muramoyl-L-alanyl-gamma-D-glutamyl-meso-2,6-diaminopimeloyl-D-alanyl-D-alanine + di-trans,octa-cis-undecaprenyl phosphate = di-trans,octa-cis-undecaprenyl diphospho-N-acetyl-alpha-D-muramoyl-L-alanyl-D-glutamyl-meso-2,6-diaminopimeloyl-D-alanyl-D-alanine + UMP. It participates in cell wall biogenesis; peptidoglycan biosynthesis. In terms of biological role, catalyzes the initial step of the lipid cycle reactions in the biosynthesis of the cell wall peptidoglycan: transfers peptidoglycan precursor phospho-MurNAc-pentapeptide from UDP-MurNAc-pentapeptide onto the lipid carrier undecaprenyl phosphate, yielding undecaprenyl-pyrophosphoryl-MurNAc-pentapeptide, known as lipid I. This is Phospho-N-acetylmuramoyl-pentapeptide-transferase from Variovorax paradoxus (strain S110).